A 340-amino-acid chain; its full sequence is Protein-arginine kinase (340 aa).

The Phosphagen kinase C-terminal domain occupies 21 to 242; that stretch reads VVLSSRIRLA…EQIIMQERVA (222 aa). ATP-binding positions include 24–28, His-79, Arg-113, 164–168, and 195–200; these read SSRIR, RASVM, and RGIYGE.

The protein belongs to the ATP:guanido phosphotransferase family.

It carries out the reaction L-arginyl-[protein] + ATP = N(omega)-phospho-L-arginyl-[protein] + ADP + H(+). Its function is as follows. Catalyzes the specific phosphorylation of arginine residues in proteins. The chain is Protein-arginine kinase from Listeria welshimeri serovar 6b (strain ATCC 35897 / DSM 20650 / CCUG 15529 / CIP 8149 / NCTC 11857 / SLCC 5334 / V8).